A 347-amino-acid chain; its full sequence is UDP-N-acetylenolpyruvoylglucosamine reductase (347 aa).

The FAD-binding PCMH-type domain occupies F24–A195. Residue R171 is part of the active site. S247 serves as the catalytic Proton donor. Residue E343 is part of the active site.

This sequence belongs to the MurB family. It depends on FAD as a cofactor.

It localises to the cytoplasm. The enzyme catalyses UDP-N-acetyl-alpha-D-muramate + NADP(+) = UDP-N-acetyl-3-O-(1-carboxyvinyl)-alpha-D-glucosamine + NADPH + H(+). It participates in cell wall biogenesis; peptidoglycan biosynthesis. Functionally, cell wall formation. The chain is UDP-N-acetylenolpyruvoylglucosamine reductase from Burkholderia mallei (strain NCTC 10247).